The chain runs to 268 residues: Cytochrome b-c1 complex subunit Rieske-3, mitochondrial (268 aa).

The N-terminal 56 residues, 1–56 (MLRIAGRKLSSSAATRSSSAFFTRNPFTFTDDSSSPARSPSPASLASQFLDQFRGF), are a transit peptide targeting the mitochondrion. Topologically, residues 57 to 105 (SSNSVSPAHQTGLVSDLPATVAAIKNPSSKIVYDDSNHERYPPGDPSKR) are mitochondrial matrix. A helical membrane pass occupies residues 106–128 (AFAYFVLTGGRFVYASLVRLLIL). At 129 to 268 (KFVLSMSASK…FMEENKLLIG (140 aa)) the chain is on the mitochondrial intermembrane side. Residues 178–266 (INLANSVDLG…YSFMEENKLL (89 aa)) enclose the Rieske domain. Positions 211, 213, 230, and 233 each coordinate [2Fe-2S] cluster. Cysteines 216 and 232 form a disulfide.

It belongs to the Rieske iron-sulfur protein family. Component of the ubiquinol-cytochrome c oxidoreductase (cytochrome b-c1 complex, complex III, CIII), a multisubunit enzyme composed of 3 respiratory subunits cytochrome b, cytochrome c1 and Rieske protein, 2 core protein subunits, and several low-molecular weight protein subunits. The complex exists as an obligatory dimer and forms supercomplexes (SCs) in the inner mitochondrial membrane with cytochrome c oxidase (complex IV, CIV). The cofactor is [2Fe-2S] cluster. High levels are seen in the flowers while a low level expression is seen in the roots, leaves and stems.

It is found in the mitochondrion inner membrane. The catalysed reaction is a quinol + 2 Fe(III)-[cytochrome c](out) = a quinone + 2 Fe(II)-[cytochrome c](out) + 2 H(+)(out). In terms of biological role, component of the ubiquinol-cytochrome c oxidoreductase, a multisubunit transmembrane complex that is part of the mitochondrial electron transport chain which drives oxidative phosphorylation. The respiratory chain contains 3 multisubunit complexes succinate dehydrogenase (complex II, CII), ubiquinol-cytochrome c oxidoreductase (cytochrome b-c1 complex, complex III, CIII) and cytochrome c oxidase (complex IV, CIV), that cooperate to transfer electrons derived from NADH and succinate to molecular oxygen, creating an electrochemical gradient over the inner membrane that drives transmembrane transport and the ATP synthase. The cytochrome b-c1 complex catalyzes electron transfer from ubiquinol to cytochrome c, linking this redox reaction to translocation of protons across the mitochondrial inner membrane, with protons being carried across the membrane as hydrogens on the quinol. In the process called Q cycle, 2 protons are consumed from the matrix, 4 protons are released into the intermembrane space and 2 electrons are passed to cytochrome c. The Rieske protein is a catalytic core subunit containing a [2Fe-2S] iron-sulfur cluster. It cycles between 2 conformational states during catalysis to transfer electrons from the quinol bound in the Q(0) site in cytochrome b to cytochrome c1. The protein is Cytochrome b-c1 complex subunit Rieske-3, mitochondrial of Nicotiana tabacum (Common tobacco).